Consider the following 127-residue polypeptide: MKKLTKTNSHRQQKLASIINEVLIEILKRGKMLDRRLFDCPLTITKIVVTADLKIANCYFFPFNTKLTFNDIMDALNNSKHAIRNFITNKINMKFSPEIRFHYDYGFDNAIKIEKLLKSSSLKDKTN.

Belongs to the RbfA family. As to quaternary structure, monomer. Binds 30S ribosomal subunits, but not 50S ribosomal subunits or 70S ribosomes.

The protein resides in the cytoplasm. Its function is as follows. One of several proteins that assist in the late maturation steps of the functional core of the 30S ribosomal subunit. Associates with free 30S ribosomal subunits (but not with 30S subunits that are part of 70S ribosomes or polysomes). Required for efficient processing of 16S rRNA. May interact with the 5'-terminal helix region of 16S rRNA. The polypeptide is Ribosome-binding factor A (Rickettsia typhi (strain ATCC VR-144 / Wilmington)).